We begin with the raw amino-acid sequence, 445 residues long: Trimethylamine monooxygenase (445 aa).

FAD is bound by residues Ser14, Glu39, Gln41, Leu47, Trp48, and His64. The NADP(+) site is built by Trp72 and Asn74. Asn74 and Val127 together coordinate FAD. NADP(+)-binding residues include Thr204, Ser205, Ser207, and Arg228. Residues Gln317 and Thr320 each contribute to the FAD site. Arg411 lines the NADP(+) pocket.

Belongs to the FMO family. FAD serves as cofactor.

The catalysed reaction is trimethylamine + NADPH + O2 = trimethylamine N-oxide + NADP(+) + H2O. In terms of biological role, catalyzes the oxidation of trimethylamine (TMA) to produce trimethylamine N-oxide (TMAO). In vitro, has a broad substrate specificity, oxidizing many nitrogen- and sulfur-containing compounds, including dimethylamine (DMA), dimethylsulfide (DMS) and dimethylsulfoxide (DMSO). This chain is Trimethylamine monooxygenase, found in Roseovarius sp. (strain 217).